The following is a 123-amino-acid chain: MFMKQLVKHLIIAGFSAAILSFLISFDAVYTGFSSSFGGTLSHFFIHSFLLIGLPLALFTDAVHRILHLKRTHTLFTKLGLYATVVYVSWDSAVWLAAAMAVYFLIECAFFPVGRAKETTISM.

The next 3 membrane-spanning stretches (helical) occupy residues 7–29 (VKHL…FDAV), 44–66 (FFIH…VHRI), and 79–101 (LGLY…AAMA).

It localises to the cell membrane. This is an uncharacterized protein from Bacillus subtilis (strain 168).